Here is a 330-residue protein sequence, read N- to C-terminus: Ferredoxin--NADP reductase (330 aa).

FAD is bound by residues threonine 19, aspartate 38, glutamine 46, tyrosine 51, alanine 91, phenylalanine 129, aspartate 286, and serine 327.

It belongs to the ferredoxin--NADP reductase type 2 family. In terms of assembly, homodimer. FAD is required as a cofactor.

It catalyses the reaction 2 reduced [2Fe-2S]-[ferredoxin] + NADP(+) + H(+) = 2 oxidized [2Fe-2S]-[ferredoxin] + NADPH. In Nocardioides sp. (strain ATCC BAA-499 / JS614), this protein is Ferredoxin--NADP reductase.